Here is a 173-residue protein sequence, read N- to C-terminus: Alpha-crystallin A chain (173 aa).

M1 is subject to N-acetylmethionine. The tract at residues 1–63 is required for complex formation with BFSP1 and BFSP2; the sequence is MDVTIQHPWF…RTVLDSGVSE (63 aa). Position 6 is a deamidated glutamine; partial (Q6). S45 is subject to Phosphoserine. Position 50 is a deamidated glutamine; partial (Q50). The sHSP domain maps to 52-162; that stretch reads LFRTVLDSGV…GHSERAIPVS (111 aa). Position 70 is an N6-acetyllysine (K70). Q90 carries the deamidated glutamine; partial modification. K99 carries the post-translational modification N6-acetyllysine. H100 is a binding site for Zn(2+). Deamidated asparagine; partial is present on N101. E102 and H107 together coordinate Zn(2+). Residue S122 is modified to Phosphoserine. At N123 the chain carries Deamidated asparagine; partial. A disordered region spans residues 145–173; that stretch reads KVQSGLDAGHSERAIPVSREEKPSSAPSS. The residue at position 147 (Q147) is a Deamidated glutamine; partial. Residues 153–167 are compositionally biased toward basic and acidic residues; it reads GHSERAIPVSREEKP. Residue H154 participates in Zn(2+) binding. O-linked (GlcNAc) serine glycosylation occurs at S162.

This sequence belongs to the small heat shock protein (HSP20) family. Heteromer composed of three CRYAA and one CRYAB subunits. Inter-subunit bridging via zinc ions enhances stability, which is crucial as there is no protein turn over in the lens. Can also form homodimers and homotetramers (dimers of dimers) which serve as the building blocks of homooligomers. Within homooligomers, the zinc-binding motif is created from residues of 3 different molecules. His-100 and Glu-102 from one molecule are ligands of the zinc ion, and His-107 and His-154 residues from additional molecules complete the site with tetrahedral coordination geometry. Part of a complex required for lens intermediate filament formation composed of BFSP1, BFSP2 and CRYAA. In terms of processing, acetylation at Lys-70 may increase chaperone activity. Undergoes age-dependent proteolytical cleavage at the C-terminus.

It localises to the cytoplasm. The protein resides in the nucleus. Contributes to the transparency and refractive index of the lens. Acts as a chaperone, preventing aggregation of various proteins under a wide range of stress conditions. Required for the correct formation of lens intermediate filaments as part of a complex composed of BFSP1, BFSP2 and CRYAA. The sequence is that of Alpha-crystallin A chain (CRYAA) from Eulemur fulvus fulvus (Brown lemur).